The primary structure comprises 256 residues: MSRKKTPKSKGASTPAASTLPTANGARPARSGTALSGPDAPPNGPLQPGRPSLGGGVDFYDVAFKVMLVGDSGVGKTCLLVRFKDGAFLAGTFISTVGIDFRNKVLDVDGVKVKLQMWDTAGQERFRSVTHAYYRDAHALLLLYDVTNKASFDNIQAWLTEIHEYAQHDVALMLLGNKVDSAHERVVKREDGEKLAKEYGLPFMETSAKTGLNVDLAFTAIAKELKQRSMKAPSEPRFRLHDYVKREGRGASCCRP.

The interval 1–51 is disordered; sequence MSRKKTPKSKGASTPAASTLPTANGARPARSGTALSGPDAPPNGPLQPGRP. The segment covering 12–23 has biased composition (low complexity); the sequence is ASTPAASTLPTA. The GTP site is built by S72, G73, V74, G75, K76, T77, C78, S95, and T96. T77 contacts Mg(2+). Short sequence motifs (switch) lie at residues 86 to 101 and 119 to 136; these read GAFL…GIDF and DTAG…YYRD. T96 and D119 together coordinate Mg(2+). GTP contacts are provided by G122, N177, K178, D180, A208, and K209. S-geranylgeranyl cysteine attachment occurs at residues C253 and C254.

Belongs to the small GTPase superfamily. Rab family. As to quaternary structure, interacts with RIMS1. Interacts with ADRA2B. Mg(2+) is required as a cofactor. Predominantly expressed in brain.

The protein localises to the golgi apparatus membrane. It localises to the cytoplasmic vesicle. It is found in the secretory vesicle membrane. The catalysed reaction is GTP + H2O = GDP + phosphate + H(+). Its activity is regulated as follows. Regulated by guanine nucleotide exchange factors (GEFs) which promote the exchange of bound GDP for free GTP. Regulated by GTPase activating proteins (GAPs) which increase the GTP hydrolysis activity. Inhibited by GDP dissociation inhibitors (GDIs). In terms of biological role, the small GTPases Rab are key regulators of intracellular membrane trafficking, from the formation of transport vesicles to their fusion with membranes. Rabs cycle between an inactive GDP-bound form and an active GTP-bound form that is able to recruit to membranes different set of downstream effectors directly responsible for vesicle formation, movement, tethering and fusion. RAB26 mediates transport of ADRA2A and ADRA2B from the Golgi to the cell membrane. Plays a role in the maturation of zymogenic granules and in pepsinogen secretion in the stomach. Plays a role in the secretion of amylase from acinar granules in the parotid gland. This chain is Ras-related protein Rab-26, found in Homo sapiens (Human).